Consider the following 86-residue polypeptide: Tryptophan-containing weak neurotoxin (86 aa).

An N-terminal signal peptide occupies residues 1 to 21 (MKTLLLTLVVVTIVCLDLGYT). Cystine bridges form between Cys24–Cys45, Cys27–Cys32, Cys38–Cys63, Cys67–Cys78, and Cys79–Cys84.

The protein belongs to the three-finger toxin family. Ancestral subfamily. Orphan group II sub-subfamily. In terms of assembly, monomer in solution. Post-translationally, the disulfide bond Cys-27-Cys-32 is probably not needed for efficient interaction of the toxin with the target receptor (Torpedo muscle or alpha-7/CHRNA7 nAChR). In terms of tissue distribution, expressed by the venom gland.

Its subcellular location is the secreted. In terms of biological role, neurotoxin that irreversibly inhibits nicotinic acetylcholine receptors (nAChR) and allosterically interacts with muscarinic acetylcholine receptors (mAChR). The loop II is involved in the interaction of this toxin with nAChR and mAChR. On nAChR, it acts as a competitive antagonist (muscle-type and alpha-7/CHRNA7) with IC(50) values in the micromolar range. On mAChR, in presence of ACh, it partially inhibits the effect of acetylcholine (ACh) (allosteric antagonist), whereas in the absence of ACh, it activates the receptor (allosteric agonist). It also shows a very weak inhibition of GABA(A) receptor composed of alpha-1-beta-3-gamma-2 (GABRA1 and GABRB3 and GABRG2) subunits (10 uM inhibit 31% current). In vivo, is nonlethal to mice at concentrations up to 20 mg/kg, but exerts a myorelaxant effect, induces a dose-dependent decrease in blood pressure and an increase in heart rate in mice and rats. The chain is Tryptophan-containing weak neurotoxin from Naja kaouthia (Monocled cobra).